The following is a 1164-amino-acid chain: DNA-directed RNA polymerase 133 kDa polypeptide (1164 aa).

This sequence belongs to the RNA polymerase beta chain family. The DNA-dependent RNA polymerase used for intermediate and late genes expression consists of eight subunits 147 kDa, 133 kDa, 35 kDa, 30 kDa, 22 kDa, 19 kDa, 18 kDa and 7 kDa totalling more than 500 kDa in mass. The same holoenzyme, with the addition of the transcription-specificity factor RAP94, is used for early gene expression.

It localises to the virion. It carries out the reaction RNA(n) + a ribonucleoside 5'-triphosphate = RNA(n+1) + diphosphate. Its function is as follows. Part of the DNA-dependent RNA polymerase which catalyzes the transcription of viral DNA into RNA using the four ribonucleoside triphosphates as substrates. Responsible for the transcription of early, intermediate and late genes. DNA-dependent RNA polymerase associates with the early transcription factor (ETF), itself composed of OPG118 and OPG133, thereby allowing the early genes transcription. Late transcription, and probably also intermediate transcription, require newly synthesized RNA polymerase. In Homo sapiens (Human), this protein is DNA-directed RNA polymerase 133 kDa polypeptide (OPG151).